Here is a 1004-residue protein sequence, read N- to C-terminus: MKNRKIWVMLVGLFTALTNGFMGTTLTFAEENEASQTIEQPSYISDFPNQVGHWQDLVGTAEKKNDSAGLWIANTKQGTNLESVSINLDAREQSSGDLELTFLYEGQSNFGLVFRGDKQKTSQWQSFAYNRDGRWQLGQPGGKWLTNIPGPTLLSGQQYKLLVRYDGKKIQTFLNDQLFYENEEVHYPDGTSINDDWMGAVGIRLFGNLSKLNIISMKSGPVGSIPVIDSSAEYRELKEKWRNQLVSKEYDSTNQALVDYVQKISNEATELDQTMNKEPNRSYLWPLEPGNTPSADLTTQFTKLQKLALAYGTKGSTLYQDDKLAATIIDGLDFMVTQKGYDGKKYHGNWWDWQIGVPQKFLNILMILEDKVSPEKQQIYTNALSSYVPDPFKQLYTKPQGTFVDLAFIPNFVTSGANRTDLALTVLGLGILQKDSGKINQASSSIVDVFKLVTKGDGFYQDGSFIQHNNIPYTGSYGNVLVKGVGQILAITADSSFQMDATLVTEFVENVDRAFLPLIYKGEMLPTVNGRSISRAPAVGKTGYGSTTMYNLLIVAKFAPNNYQKKFQEAVKYWMKENPDYYLTNARDFNDLQMTMQLLTNPEITGGQLPFTGTKLYASMDRFVQRTPSYMFGLGLYSKRTASFEAGNKENKRGWHTGDGMMYVYNDDEVQFNSSYWPTVDPYRLPGTTVDTISLADEVSAFTTITSKEQWVGGVTSDNQAVVGMALNKDGTKNNGKLLPMNLQAKKSWFVLNGQIIALGAGIKGDTEASIETVVDNRLLNDAYQYQVLSNIGEIHEKNETSKKQWLLLKSDHSNANMGYYFPEETTVNVKSETRKGTYKAINEAFPSDKEYVGDYRTFTIQHGQHPTNEHYAYVVLPGIDETDLKTYAAKKTVEVLSNTEEIQAVKQEEEGYLGVNIWSETGGTIAGITSNKAISLMRKTQQHQKTYTFSDPTQTTKTLTLKIPKDYSTVISQSDGITYDDATETFTINFENAAGSSKQIIVE.

The signal sequence occupies residues 1–29; the sequence is MKNRKIWVMLVGLFTALTNGFMGTTLTFA. Residues histidine 468, tyrosine 477, and arginine 531 contribute to the active site.

This sequence belongs to the polysaccharide lyase 8 family.

It is found in the secreted. It catalyses the reaction [hyaluronan](n) = n 3-(4-deoxy-beta-D-gluc-4-enuronosyl)-N-acetyl-D-glucosamine + H2O. The catalysed reaction is Eliminative degradation of polysaccharides containing 1,4-beta-D-hexosaminyl and 1,3-beta-D-glucuronosyl linkages to disaccharides containing 4-deoxy-beta-D-gluc-4-enuronosyl groups.. Its function is as follows. Degrades hyaluronic acid (HA) and chondroitin sulfate (CS) A in vitro. Is not active against heparin sodium salt (HS). Involved in the pathogenesis of vancomycin-resistant E.faecalis infections. Contributes to attenuation of the lipopolysaccharide (LPS)-mediated nuclear factor (NF)-kappa-B activation assayed in the mouse RAW-Blue reporter macrophages. This is Hyaluronate lyase HylB from Enterococcus faecalis (strain ATCC 700802 / V583).